We begin with the raw amino-acid sequence, 340 residues long: Alpha-1,4-N-acetylglucosaminyltransferase (340 aa).

Over methionine 1–glutamate 4 the chain is Cytoplasmic. Residues leucine 5–leucine 25 form a helical; Signal-anchor for type II membrane protein membrane-spanning segment. The Lumenal segment spans residues lysine 26–lysine 340. 2 N-linked (GlcNAc...) asparagine glycosylation sites follow: asparagine 99 and asparagine 138. The DXD motif signature appears at aspartate 167–aspartate 169. Asparagine 251 and asparagine 282 each carry an N-linked (GlcNAc...) asparagine glycan.

This sequence belongs to the glycosyltransferase 32 family. Detected in stomach and pancreas.

The protein resides in the golgi apparatus membrane. The protein operates within protein modification; protein glycosylation. In terms of biological role, catalyzes the transfer of N-acetylglucosamine (GlcNAc) to core 2 branched O-glycans. Necessary for the synthesis of type III mucin which is specifically produced in the stomach, duodenum, and pancreatic duct. May protect against inflammation-associated gastric adenocarcinomas. In Homo sapiens (Human), this protein is Alpha-1,4-N-acetylglucosaminyltransferase (A4GNT).